The chain runs to 1357 residues: DNA-directed RNA polymerase subunit beta (1357 aa).

The protein belongs to the RNA polymerase beta chain family. In terms of assembly, the RNAP catalytic core consists of 2 alpha, 1 beta, 1 beta' and 1 omega subunit. When a sigma factor is associated with the core the holoenzyme is formed, which can initiate transcription.

It carries out the reaction RNA(n) + a ribonucleoside 5'-triphosphate = RNA(n+1) + diphosphate. Its function is as follows. DNA-dependent RNA polymerase catalyzes the transcription of DNA into RNA using the four ribonucleoside triphosphates as substrates. In Pseudomonas syringae pv. tomato (strain ATCC BAA-871 / DC3000), this protein is DNA-directed RNA polymerase subunit beta.